Here is a 188-residue protein sequence, read N- to C-terminus: 3-hydroxyanthranilate 3,4-dioxygenase 2 (188 aa).

Residue R46 coordinates O2. Residues H50, E70, and H108 each coordinate Fe cation. E70 contacts substrate. 2 residues coordinate substrate: R112 and E122.

Belongs to the 3-HAO family. It depends on Fe(2+) as a cofactor.

Its subcellular location is the cytoplasm. It carries out the reaction 3-hydroxyanthranilate + O2 = (2Z,4Z)-2-amino-3-carboxymuconate 6-semialdehyde. It functions in the pathway cofactor biosynthesis; NAD(+) biosynthesis; quinolinate from L-kynurenine: step 3/3. Catalyzes the oxidative ring opening of 3-hydroxyanthranilate to 2-amino-3-carboxymuconate semialdehyde, which spontaneously cyclizes to quinolinate. The polypeptide is 3-hydroxyanthranilate 3,4-dioxygenase 2 (bna1-2) (Aspergillus fumigatus (strain CBS 144.89 / FGSC A1163 / CEA10) (Neosartorya fumigata)).